The sequence spans 349 residues: Anthranilate phosphoribosyltransferase (349 aa).

5-phospho-alpha-D-ribose 1-diphosphate-binding positions include Gly-82, 85–86, 92–95, 110–118, and Ser-122; these read GD, NVST, and KHGNRGVSS. Gly-82 provides a ligand contact to anthranilate. Ser-94 contacts Mg(2+). Asn-113 provides a ligand contact to anthranilate. Arg-168 lines the anthranilate pocket. Residues Asp-227 and Glu-228 each contribute to the Mg(2+) site.

This sequence belongs to the anthranilate phosphoribosyltransferase family. As to quaternary structure, homodimer. Mg(2+) is required as a cofactor.

It catalyses the reaction N-(5-phospho-beta-D-ribosyl)anthranilate + diphosphate = 5-phospho-alpha-D-ribose 1-diphosphate + anthranilate. The protein operates within amino-acid biosynthesis; L-tryptophan biosynthesis; L-tryptophan from chorismate: step 2/5. Its function is as follows. Catalyzes the transfer of the phosphoribosyl group of 5-phosphorylribose-1-pyrophosphate (PRPP) to anthranilate to yield N-(5'-phosphoribosyl)-anthranilate (PRA). This Acinetobacter baumannii (strain ATCC 17978 / DSM 105126 / CIP 53.77 / LMG 1025 / NCDC KC755 / 5377) protein is Anthranilate phosphoribosyltransferase.